Reading from the N-terminus, the 428-residue chain is Aerobic C4-dicarboxylate transport protein (428 aa).

9 helical membrane passes run 5–27 (LFKSLYFQVLTAIAIGILLGHYY), 47–64 (MIIAPVIFCTVVTGIAGM), 77–99 (ALLYFEIVSTIALIIGLIIVNVV), 141–163 (VIGAFASGNILQVLLFAVLFGFA), 184–206 (VIFGIINMIMRLAPIGAFGAMAF), 216–238 (LVQLGQLIICFYITCILFVVVVL), 289–311 (VVGLVIPTGYSFNLDGTSIYLTM), 326–348 (IFHQITLLVVLLLSSKGAAGVTG), and 353–375 (VLAATISAVGHLPVAGLALILGI).

It belongs to the dicarboxylate/amino acid:cation symporter (DAACS) (TC 2.A.23) family.

The protein localises to the cell inner membrane. In terms of biological role, responsible for the transport of dicarboxylates such as succinate, fumarate, and malate from the periplasm across the inner membrane. This Salmonella typhimurium (strain LT2 / SGSC1412 / ATCC 700720) protein is Aerobic C4-dicarboxylate transport protein (dctA).